The sequence spans 147 residues: D-aminoacyl-tRNA deacylase (147 aa).

A Gly-cisPro motif, important for rejection of L-amino acids motif is present at residues 136–137 (GP).

This sequence belongs to the DTD family. As to quaternary structure, homodimer.

It localises to the cytoplasm. It carries out the reaction glycyl-tRNA(Ala) + H2O = tRNA(Ala) + glycine + H(+). The catalysed reaction is a D-aminoacyl-tRNA + H2O = a tRNA + a D-alpha-amino acid + H(+). An aminoacyl-tRNA editing enzyme that deacylates mischarged D-aminoacyl-tRNAs. Also deacylates mischarged glycyl-tRNA(Ala), protecting cells against glycine mischarging by AlaRS. Acts via tRNA-based rather than protein-based catalysis; rejects L-amino acids rather than detecting D-amino acids in the active site. By recycling D-aminoacyl-tRNA to D-amino acids and free tRNA molecules, this enzyme counteracts the toxicity associated with the formation of D-aminoacyl-tRNA entities in vivo and helps enforce protein L-homochirality. This Nitratiruptor sp. (strain SB155-2) protein is D-aminoacyl-tRNA deacylase.